The chain runs to 364 residues: Probable zinc transporter 10 (364 aa).

Positions 1 to 28 are cleaved as a signal peptide; it reads MTKSHVIFSASIALFLLLSISHFPGALS. The Extracellular segment spans residues 29-52; that stretch reads QSNKDCQSKSNYSCIDKNKALDLK. Residues 53 to 73 form a helical membrane-spanning segment; that stretch reads LLSIFSILITSLIGVCLPFFA. At 74–85 the chain is on the cytoplasmic side; that stretch reads RSIPAFQPEKSH. Residues 86–106 traverse the membrane as a helical segment; the sequence is FLIVKSFASGIILSTGFMHVL. At 107–125 the chain is on the extracellular side; that stretch reads PDSFEMLSSPCLNDNPWHK. Residues 126–146 traverse the membrane as a helical segment; it reads FPFAGFVAMMSAVFTLMVDSI. Topologically, residues 147-209 are cytoplasmic; that stretch reads TTSVFTKSGR…GSYLQLLRYR (63 aa). Residues 210 to 230 form a helical membrane-spanning segment; the sequence is ILAIVLELGIVVQSIVIGLSV. The Extracellular portion of the chain corresponds to 231 to 241; the sequence is GDTNNTCTIKG. The chain crosses the membrane as a helical span at residues 242 to 262; sequence LVAALCFHQMFEGMGLGGCIL. Residues 263-271 are Cytoplasmic-facing; the sequence is QAEYGWVKK. Residues 272–292 traverse the membrane as a helical segment; the sequence is AVMAFFFAVTTPFGVVLGMAL. The Extracellular portion of the chain corresponds to 293–303; the sequence is SKTYKENSPES. The helical transmembrane segment at 304 to 324 threads the bilayer; sequence LITVGLLNASSAGLLIYMALV. Residues 325-343 are Cytoplasmic-facing; that stretch reads DLLAADFMGQKMQRSIKLQ. Residues 344 to 364 form a helical membrane-spanning segment; the sequence is LKSYAAVLLGAGGMSVMAKWA.

The protein belongs to the ZIP transporter (TC 2.A.5) family.

Its subcellular location is the cell membrane. Probably mediates zinc uptake from the rhizosphere. This chain is Probable zinc transporter 10 (ZIP10), found in Arabidopsis thaliana (Mouse-ear cress).